Consider the following 336-residue polypeptide: Glyceraldehyde-3-phosphate dehydrogenase (336 aa).

NAD(+)-binding positions include 12–13 (RI), D34, R78, and T121. D-glyceraldehyde 3-phosphate contacts are provided by residues 151-153 (SCT), T182, R199, 212-213 (TG), and R235. C152 acts as the Nucleophile in catalysis. N316 contacts NAD(+).

This sequence belongs to the glyceraldehyde-3-phosphate dehydrogenase family. Homotetramer.

It is found in the cytoplasm. It catalyses the reaction D-glyceraldehyde 3-phosphate + phosphate + NAD(+) = (2R)-3-phospho-glyceroyl phosphate + NADH + H(+). It participates in carbohydrate degradation; glycolysis; pyruvate from D-glyceraldehyde 3-phosphate: step 1/5. Functionally, catalyzes the oxidative phosphorylation of glyceraldehyde 3-phosphate (G3P) to 1,3-bisphosphoglycerate (BPG) using the cofactor NAD. The first reaction step involves the formation of a hemiacetal intermediate between G3P and a cysteine residue, and this hemiacetal intermediate is then oxidized to a thioester, with concomitant reduction of NAD to NADH. The reduced NADH is then exchanged with the second NAD, and the thioester is attacked by a nucleophilic inorganic phosphate to produce BPG. In Streptococcus pyogenes serotype M1, this protein is Glyceraldehyde-3-phosphate dehydrogenase (gap).